Reading from the N-terminus, the 249-residue chain is MEFRVIIPARFDSTRLPGKALVDIAGKPMIQHVYESAIKSGAEEVVIATDDKRIRQVAEDFGAVVCMTSSDHQSGTERIAEAAVALGFEDDEIIVCLQGDEPLIPPDAIRKLAEDLDEHDNVKVASLCTPITEVDELFNPHSTKVVLNRRNYALYFSHAPIPWGRDTFSDKENLQLNGSHYRHVGIYAYRVGFLEEYLSWDACPAEKMEALEQLRILWHGGRIHMVVAKSKCPPGVDTEEDLERVRAYF.

This sequence belongs to the KdsB family.

Its subcellular location is the cytoplasm. The enzyme catalyses 3-deoxy-alpha-D-manno-oct-2-ulosonate + CTP = CMP-3-deoxy-beta-D-manno-octulosonate + diphosphate. The protein operates within nucleotide-sugar biosynthesis; CMP-3-deoxy-D-manno-octulosonate biosynthesis; CMP-3-deoxy-D-manno-octulosonate from 3-deoxy-D-manno-octulosonate and CTP: step 1/1. It functions in the pathway bacterial outer membrane biogenesis; lipopolysaccharide biosynthesis. Its function is as follows. Activates KDO (a required 8-carbon sugar) for incorporation into bacterial lipopolysaccharide in Gram-negative bacteria. This chain is 3-deoxy-manno-octulosonate cytidylyltransferase, found in Coxiella burnetii (strain CbuG_Q212) (Coxiella burnetii (strain Q212)).